A 323-amino-acid chain; its full sequence is 4-diphosphocytidyl-2-C-methyl-D-erythritol kinase (323 aa).

Residue Lys-25 is part of the active site. 110 to 120 serves as a coordination point for ATP; sequence PVAGGMAGGSA. Asp-152 is an active-site residue.

Belongs to the GHMP kinase family. IspE subfamily.

The catalysed reaction is 4-CDP-2-C-methyl-D-erythritol + ATP = 4-CDP-2-C-methyl-D-erythritol 2-phosphate + ADP + H(+). It functions in the pathway isoprenoid biosynthesis; isopentenyl diphosphate biosynthesis via DXP pathway; isopentenyl diphosphate from 1-deoxy-D-xylulose 5-phosphate: step 3/6. Its function is as follows. Catalyzes the phosphorylation of the position 2 hydroxy group of 4-diphosphocytidyl-2C-methyl-D-erythritol. This chain is 4-diphosphocytidyl-2-C-methyl-D-erythritol kinase, found in Mycobacterium leprae (strain Br4923).